The following is a 305-amino-acid chain: Heme A synthase (305 aa).

Topologically, residues 1 to 6 (MKKFLK) are cytoplasmic. The helical transmembrane segment at 7 to 27 (VWSVLTIICMTVVVFGGALVT) threads the bilayer. At 28 to 63 (KTGSADGCGNSWPLCNGQLVRLTDVTPEKLIEFMHR) the chain is on the extracellular side. Cys-35 and Cys-42 are disulfide-bonded. Glu-59 is an active-site residue. His-62 provides a ligand contact to heme o. The chain crosses the membrane as a helical span at residues 64-84 (MTTGISSIFVIVLAICAWIYM). The Cytoplasmic segment spans residues 85–92 (KNRRETKP). Residues 93–113 (LAIIAVLFLIIQALMGMAAVV) traverse the membrane as a helical segment. Over 114-122 (WGQNPYIMA) the chain is Extracellular. The chain crosses the membrane as a helical span at residues 123 to 143 (LHFGISIICYASIVLLALMIF). His-124 is a heme o binding site. The Cytoplasmic segment spans residues 144–160 (EVDRKFDARNLVMGTKL). A helical transmembrane segment spans residues 161–181 (RVNIYALTIYTYLAVYTGALV). The Extracellular segment spans residues 182 to 212 (RHEKASMAVPVWPFENGHFIMPTSVQDYVQY). A helical transmembrane segment spans residues 213 to 233 (FHRLAAFILIVWLLYVTWLVF). His-214 contacts heme b. The Cytoplasmic segment spans residues 234-240 (RDYRRYR). The helical transmembrane segment at 241–261 (VLTFSMVLSLVFIALQAVTGA) threads the bilayer. The Extracellular portion of the chain corresponds to 262 to 271 (LSVYTGVNLY). A helical membrane pass occupies residues 272 to 292 (IALAHSLIITMLFALLCYLCL). His-276 is a binding site for heme b. The Cytoplasmic segment spans residues 293–305 (LASRSKSNRLRIK).

This sequence belongs to the COX15/CtaA family. Type 1 subfamily. In terms of assembly, interacts with CtaB. It depends on heme b as a cofactor.

It localises to the cell membrane. The catalysed reaction is Fe(II)-heme o + 2 A + H2O = Fe(II)-heme a + 2 AH2. It functions in the pathway porphyrin-containing compound metabolism; heme A biosynthesis; heme A from heme O: step 1/1. Catalyzes the conversion of heme O to heme A by two successive hydroxylations of the methyl group at C8. The first hydroxylation forms heme I, the second hydroxylation results in an unstable dihydroxymethyl group, which spontaneously dehydrates, resulting in the formyl group of heme A. The protein is Heme A synthase of Listeria monocytogenes serovar 1/2a (strain ATCC BAA-679 / EGD-e).